A 1079-amino-acid chain; its full sequence is MAFSSCCWILLALTWCTSAYGPDQRAQKKGDIILGGLFPIHFGVAAKDQNLESRPESVECIRYNFRGFRWLQAMIFAIEEINSSPALLPNMTLGYRIFDTCNTVSKALEATLSFVAQNKIDSLNLDEFCNCSEHIPSTIAVVGATGSGISTAVANLLGLFYIPQVSYASSSRLLSNKNQFKSFLRTIPNDEHQATAMADIIEYFRWNWVGTIAADDDYGRPGIEKFREEAEERDICIDFSELISQYSDEEEIQQVVEVIQNSTAKVIVVFSSGPDLEPLIKEIVRRNITGKIWLASEAWASSSLIAMPEYFHVVGGTIGFALKAGQIPGFREFLQKVHPSKSVHNGFAKEFWEETFNCHLQEGAKGPLTTDTFLRGHEEGGGRISNSSTAFRPLCTGDENISSVETPYMDYTHLRISYNVYLAVYSIAHALQDIYTCIPGRGLFTNGSCADIKKVEAWQVLKHLRHLNFTSNMGEQVTFDEYGDLAGNYSIINWHLSPEDGSIVFKEVGYYNVYAKKGERLFINEEKILWSGFSREVPFSNCSRDCLAGTRKGIIEGEPTCCFECVECPDGEYSDETDASACDKCPDDFWSNENHTSCIAKEIEFLSWTEPFGIALTLFAVLGIFLTAFVLGVFIKFRNTPIVKATNRELSYLLLFSLLCCFSSSLFFIGEPQDWTCRLRQPAFGISFVLCISCILVKTNRVLLVFEAKIPTSFHRKWWGLNLQFLLVFLCTFMQIVICAIWLYTAPPSSYRNHELEDEIIFITCHEGSLMALGFLIGYTCLLAAICFFFAFKSRKLPENFNEAKFITFSMLIFFIVWISFIPAYASTYGKFVSAVEVIAILAASFGLLACIFFNKVYIILFKPSRNTIEEVRCSTAAHAFKVAARATLRRSNVSRQRSSSLGGSTGSTPSSSISSKSNSEDPFPQPERQKKQQPLALTQHVPQPQAPSTPQPQPQLQQQPRCKQKVIFGSGTVTFSLSFDEPQKSATAHRNSTHQNSLEAQKNNDALTRHQALLPLQCGEADAELTAQETGLQGSVGGDHHPEMEDPEEMSPALVMSNSRSFVISGGGSTVTENMLHS.

An N-terminal signal peptide occupies residues 1 to 19; it reads MAFSSCCWILLALTWCTSA. Residues 20-610 are Extracellular-facing; the sequence is YGPDQRAQKK…KEIEFLSWTE (591 aa). The interval 22–188 is ligand-binding 1 (LB1); that stretch reads PDQRAQKKGD…QFKSFLRTIP (167 aa). Cysteine 60 and cysteine 101 are disulfide-bonded. 66-70 serves as a coordination point for phosphate; the sequence is RGFRW. Positions 81, 84, 87, and 88 each coordinate Ca(2+). N-linked (GlcNAc...) asparagine glycosylation is present at asparagine 90. Threonine 100 is a binding site for Ca(2+). The N-linked (GlcNAc...) asparagine glycan is linked to asparagine 130. Residue threonine 145 coordinates Ca(2+). The L-tryptophan site is built by serine 147, alanine 168, and serine 170. Residues serine 170, proline 188, aspartate 190, glutamate 231, and aspartate 234 each contribute to the Ca(2+) site. Positions 189–324 are ligand-binding 2 (LB2); sequence NDEHQATAMA…GGTIGFALKA (136 aa). Intrachain disulfides connect cysteine 236/cysteine 561, cysteine 358/cysteine 395, cysteine 437/cysteine 449, cysteine 542/cysteine 562, cysteine 546/cysteine 565, cysteine 568/cysteine 582, and cysteine 585/cysteine 598. Residues aspartate 238 and serine 240 each contribute to the spermine site. Asparagine 261 and asparagine 287 each carry an N-linked (GlcNAc...) asparagine glycan. Glutamate 297 serves as a coordination point for Ca(2+). Glutamate 297 contributes to the L-tryptophan binding site. 2 N-linked (GlcNAc...) asparagine glycosylation sites follow: asparagine 386 and asparagine 400. 415–417 provides a ligand contact to phosphate; it reads RIS. N-linked (GlcNAc...) asparagine glycans are attached at residues asparagine 446, asparagine 468, and asparagine 488. Residue tyrosine 489 coordinates Ca(2+). An N-linked (GlcNAc...) asparagine glycan is attached at asparagine 541. The tract at residues 542–612 is cysteine-rich (CR); it reads CSRDCLAGTR…IEFLSWTEPF (71 aa). Glycine 557 lines the Ca(2+) pocket. N-linked (GlcNAc...) asparagine glycosylation is present at asparagine 594. A helical membrane pass occupies residues 611–636; it reads PFGIALTLFAVLGIFLTAFVLGVFIK. Over 637–648 the chain is Cytoplasmic; sequence FRNTPIVKATNR. Residues 637 to 648 are intracellular loop 1 (ICL1); that stretch reads FRNTPIVKATNR. A helical transmembrane segment spans residues 649–668; the sequence is ELSYLLLFSLLCCFSSSLFF. Residues 669-674 lie on the Extracellular side of the membrane; the sequence is IGEPQD. A helical transmembrane segment spans residues 675-698; it reads WTCRLRQPAFGISFVLCISCILVK. Residues 699–722 are Cytoplasmic-facing; sequence TNRVLLVFEAKIPTSFHRKWWGLN. The interval 699–722 is intracellular loop 2 (ICL2); that stretch reads TNRVLLVFEAKIPTSFHRKWWGLN. Residues 723–745 form a helical membrane-spanning segment; that stretch reads LQFLLVFLCTFMQIVICAIWLYT. Topologically, residues 746-769 are extracellular; sequence APPSSYRNHELEDEIIFITCHEGS. Residues 770–789 form a helical membrane-spanning segment; that stretch reads LMALGFLIGYTCLLAAICFF. Topologically, residues 790–805 are cytoplasmic; sequence FAFKSRKLPENFNEAK. An intracellular loop 3 (ICL3) region spans residues 790-805; sequence FAFKSRKLPENFNEAK. The helical transmembrane segment at 806–828 threads the bilayer; the sequence is FITFSMLIFFIVWISFIPAYAST. At 829–832 the chain is on the extracellular side; the sequence is YGKF. Residues 833-854 traverse the membrane as a helical segment; that stretch reads VSAVEVIAILAASFGLLACIFF. The Cytoplasmic segment spans residues 855–1079; it reads NKVYIILFKP…STVTENMLHS (225 aa). Residues 855–1079 are C-terminus; it reads NKVYIILFKP…STVTENMLHS (225 aa). Positions 880–900 are interaction with RNF19A; that stretch reads AFKVAARATLRRSNVSRQRSS. A Phosphothreonine modification is found at threonine 888. Positions 890-898 are arginine-rich retention motif; the sequence is RRSNVSRQR. Phosphoserine is present on residues serine 892, serine 899, and serine 920. Over residues 892–918 the composition is skewed to low complexity; sequence SNVSRQRSSSLGGSTGSTPSSSISSKS. Positions 892 to 963 are disordered; sequence SNVSRQRSSS…QPQLQQQPRC (72 aa). Residues 945–954 show a composition bias toward pro residues; that stretch reads PQAPSTPQPQ. Serine 1062 carries the phosphoserine modification.

Belongs to the G-protein coupled receptor 3 family. Homodimer; disulfide-linked. Interacts with VCP. Interacts with ARRB1. Phosphorylation at Thr-888 by PKC impairs coupling with G(q)/G(11) G-proteins, while it does not affect G(i)/G(o)-coupling. Phosphorylation at Ser-892 by PKC and Ser-899 by PKA promote plasma membrane localization. Post-translationally, ubiquitinated by RNF19A; which induces proteasomal degradation.

The protein resides in the cell membrane. With respect to regulation, in resting state, adopts an open conformation, anion-binding promoting the inactive configuration. Upon aromatic amino acid-binding, the groove in the extracellular venus flytrap module is closed, thereby inducing the formation of a novel homodimer interface between subunits. Calcium ions stabilize the active state by enhancing homodimer interactions between membrane-proximal domains to fully activate the receptor. Upon activation, the homodimer adopts an asymmetric configuration of the 7-transmembrane region that primes one protomer for G-protein coupling. G-protein binding expands the transmembrane dimer interface; the restriction imposed by the receptor dimer, in combination with intracellular loop 2 (ICL2), enables G-protein activation by facilitating conformational transition of G-protein alpha. Coupling to different classes of G-proteins results in distinct CASR-G-protein interfaces. In contrast to human protein, not activated by AMG 416, a D-amino acid-containing peptide agonist: this is probably due to the absence of a Cys residue at position 482, which forms a disulfide bond with the AMG 416 peptide agonist in human and that is replaced by a Tyr residue in pig. Functionally, G-protein-coupled receptor that senses changes in the extracellular concentration of calcium ions and plays a key role in maintaining calcium homeostasis. Senses fluctuations in the circulating calcium concentration: activated by elevated circulating calcium, leading to decreased parathyroid hormone (PTH) secretion in parathyroid glands. In kidneys, acts as a key regulator of renal tubular calcium resorption. Ligand binding causes a conformation change that triggers signaling via guanine nucleotide-binding proteins (G-proteins) and modulates the activity of downstream effectors. CASR is coupled with different G(q)/G(11), G(i)/G(o)- or G(s)-classes of G-proteins depending on the context. In the parathyroid and kidney, CASR signals through G(q)/G(11) and G(i)/G(o) G-proteins: G(q)/G(11) coupling activates phospholipase C-beta, releasing diacylglycerol (DAG) and inositol 1,4,5-trisphosphate (IP3) second messengers, while G(i)/G(o) coupling mediates inhibition of adenylate cyclase activity. The G-protein-coupled receptor activity is activated by a co-agonist mechanism: aromatic amino acids, such as Trp or Phe, act concertedly with divalent cations, such as calcium or magnesium, to achieve full receptor activation. Acts as an activator of the NLRP3 inflammasome via G(i)/G(o)-mediated signaling: down-regulation of cyclic AMP (cAMP) relieving NLRP3 inhibition by cAMP. Acts as a regulator of proton-sensing receptor GPR68 in a seesaw manner: CASR-mediated signaling inhibits GPR68 signaling in response to extracellular calcium, while GPR68 inhibits CASR in presence of extracellular protons. The protein is Extracellular calcium-sensing receptor (CASR) of Sus scrofa (Pig).